Consider the following 360-residue polypeptide: tRNA N6-adenosine threonylcarbamoyltransferase (360 aa).

Residues H115 and H119 each coordinate Fe cation. Substrate-binding positions include 137–141 (LVSGG), D170, G183, and N283. D311 contacts Fe cation.

Belongs to the KAE1 / TsaD family. Requires Fe(2+) as cofactor.

Its subcellular location is the cytoplasm. It carries out the reaction L-threonylcarbamoyladenylate + adenosine(37) in tRNA = N(6)-L-threonylcarbamoyladenosine(37) in tRNA + AMP + H(+). In terms of biological role, required for the formation of a threonylcarbamoyl group on adenosine at position 37 (t(6)A37) in tRNAs that read codons beginning with adenine. Is involved in the transfer of the threonylcarbamoyl moiety of threonylcarbamoyl-AMP (TC-AMP) to the N6 group of A37, together with TsaE and TsaB. TsaD likely plays a direct catalytic role in this reaction. This Rhizobium meliloti (strain 1021) (Ensifer meliloti) protein is tRNA N6-adenosine threonylcarbamoyltransferase.